Reading from the N-terminus, the 257-residue chain is Nickel import system ATP-binding protein NikD (257 aa).

The 242-residue stretch at 4 to 245 (IDIQNLTIKN…HLHPYTERLI (242 aa)) folds into the ABC transporter domain. Residue 37–44 (GESGAGKS) participates in ATP binding.

It belongs to the ABC transporter superfamily. As to quaternary structure, the complex is composed of two ATP-binding proteins (NikD and NikE), two transmembrane proteins (NikB and NikC) and a solute-binding protein (NikA).

Its subcellular location is the cell membrane. It catalyses the reaction Ni(2+)(out) + ATP + H2O = Ni(2+)(in) + ADP + phosphate + H(+). Functionally, part of the ABC transporter complex NikABCDE (Opp2) involved in nickel import. Probably responsible for energy coupling to the transport system. This Staphylococcus aureus (strain MSSA476) protein is Nickel import system ATP-binding protein NikD.